The following is a 145-amino-acid chain: Glycine-rich protein (145 aa).

The N-terminal stretch at 1–19 (MKLTLAVVVVFAYIATTNA) is a signal peptide.

Component of the acid-insoluble and acid-soluble organic matrix of calcified layers of the shell (at protein level).

The protein resides in the secreted. The protein is Glycine-rich protein of Lottia gigantea (Giant owl limpet).